A 337-amino-acid chain; its full sequence is Viral cathepsin (337 aa).

Residues 1–18 form the signal peptide; it reads MYLIYYYTIIAVATASIA. A propeptide spans 19 to 126 (activation peptide); the sequence is NEKIFYDIDS…VTVAGPSART (108 aa). 3 cysteine pairs are disulfide-bonded: C147/C188, C181/C221, and C276/C324. Residue C150 is part of the active site. Catalysis depends on residues H283 and N303.

Belongs to the peptidase C1 family. Post-translationally, synthesized as an inactive proenzyme and activated by proteolytic removal of the inhibitory propeptide.

It catalyses the reaction Endopeptidase of broad specificity, hydrolyzing substrates of both cathepsin L and cathepsin B.. Its function is as follows. Cysteine protease that plays an essential role in host liquefaction to facilitate horizontal transmission of the virus. May participate in the degradation of foreign protein expressed by the baculovirus system. This Spodoptera litura multicapsid nucleopolyhedrovirus (SpltMNPV) protein is Viral cathepsin (VCATH).